A 320-amino-acid polypeptide reads, in one-letter code: Cytochrome f (320 aa).

The N-terminal stretch at 1–35 is a signal peptide; the sequence is MENRNTFSWVKEQMTRSISVSIMIYVITRTSISNA. 4 residues coordinate heme: Tyr-36, Cys-56, Cys-59, and His-60. The chain crosses the membrane as a helical span at residues 286–306; it reads VQGLLFFFASVILAQVFLVLK.

The protein belongs to the cytochrome f family. In terms of assembly, the 4 large subunits of the cytochrome b6-f complex are cytochrome b6, subunit IV (17 kDa polypeptide, petD), cytochrome f and the Rieske protein, while the 4 small subunits are PetG, PetL, PetM and PetN. The complex functions as a dimer. Requires heme as cofactor.

Its subcellular location is the plastid. The protein localises to the chloroplast thylakoid membrane. Component of the cytochrome b6-f complex, which mediates electron transfer between photosystem II (PSII) and photosystem I (PSI), cyclic electron flow around PSI, and state transitions. The polypeptide is Cytochrome f (Oryza nivara (Indian wild rice)).